We begin with the raw amino-acid sequence, 121 residues long: Acid shock protein (121 aa).

A signal peptide spans 1-21; it reads MKKVLALMVAATLGLSSVAFA. Positions 22–63 are excised as a propeptide; it reads ADTTATATPAATSTTATVAAQTKATQHQKHKVTKKTTEQKAQ. The tract at residues 40–121 is disordered; that stretch reads AAQTKATQHQ…AKKPVAAPAA (82 aa). The span at 74–83 shows a compositional bias: low complexity; it reads VQKAPVQKAQ. The span at 84-93 shows a compositional bias: basic residues; the sequence is AAKKHVKKAS. Low complexity predominate over residues 94–103; sequence VQKAPVQKAQ. Positions 104–113 are enriched in basic residues; it reads AAKKHHKTAK.

The protein belongs to the Asr family. In terms of processing, proteolytic processing gives rise to the active protein.

The protein resides in the periplasm. Functionally, required for growth and/or survival at acidic conditions. The chain is Acid shock protein from Yersinia pseudotuberculosis serotype O:1b (strain IP 31758).